Consider the following 156-residue polypeptide: Small ribosomal subunit protein uS7c (156 aa).

This sequence belongs to the universal ribosomal protein uS7 family. As to quaternary structure, part of the 30S ribosomal subunit.

The protein localises to the plastid. The protein resides in the chloroplast. One of the primary rRNA binding proteins, it binds directly to 16S rRNA where it nucleates assembly of the head domain of the 30S subunit. The protein is Small ribosomal subunit protein uS7c (rps7) of Gracilaria tenuistipitata var. liui (Red alga).